Here is a 199-residue protein sequence, read N- to C-terminus: V-type ATP synthase subunit E (199 aa).

Belongs to the V-ATPase E subunit family.

Its function is as follows. Produces ATP from ADP in the presence of a proton gradient across the membrane. This chain is V-type ATP synthase subunit E, found in Clostridium botulinum (strain Hall / ATCC 3502 / NCTC 13319 / Type A).